The sequence spans 432 residues: 23S rRNA (uracil(1939)-C(5))-methyltransferase RlmD (432 aa).

Residues 1 to 53 (MPIGKIESLDHEARGITRQEGKAIFVDGALPGETVEYASFRRKSKFELAHLVH) enclose the TRAM domain. Residues C66, C72, C75, and C154 each contribute to the [4Fe-4S] cluster site. S-adenosyl-L-methionine-binding residues include Q263, F292, N297, E313, N341, and D362. Residue C388 is the Nucleophile of the active site.

It belongs to the class I-like SAM-binding methyltransferase superfamily. RNA M5U methyltransferase family. RlmD subfamily.

The catalysed reaction is uridine(1939) in 23S rRNA + S-adenosyl-L-methionine = 5-methyluridine(1939) in 23S rRNA + S-adenosyl-L-homocysteine + H(+). Its function is as follows. Catalyzes the formation of 5-methyl-uridine at position 1939 (m5U1939) in 23S rRNA. The sequence is that of 23S rRNA (uracil(1939)-C(5))-methyltransferase RlmD from Dechloromonas aromatica (strain RCB).